A 372-amino-acid polypeptide reads, in one-letter code: Aminodeoxyfutalosine synthase (372 aa).

In terms of domain architecture, Radical SAM core spans 53-292 (HKTYFVHSIR…VARLYLDNFP (240 aa)). Positions 69, 73, and 76 each coordinate [4Fe-4S] cluster.

It belongs to the radical SAM superfamily. MqnE family. It depends on [4Fe-4S] cluster as a cofactor.

The enzyme catalyses 3-[(1-carboxyvinyl)-oxy]benzoate + S-adenosyl-L-methionine + H2O = 6-amino-6-deoxyfutalosine + hydrogencarbonate + L-methionine + H(+). Its pathway is quinol/quinone metabolism; menaquinone biosynthesis. Radical SAM enzyme that catalyzes the addition of the adenosyl radical to the double bond of 3-[(1-carboxyvinyl)oxy]benzoate, leading to aminodeoxyfutalosine (AFL), a key intermediate in the formation of menaquinone (MK, vitamin K2) from chorismate. This is Aminodeoxyfutalosine synthase from Thermus thermophilus (strain ATCC 27634 / DSM 579 / HB8).